A 122-amino-acid chain; its full sequence is Large ribosomal subunit protein bL12 (122 aa).

The protein belongs to the bacterial ribosomal protein bL12 family. In terms of assembly, homodimer. Part of the ribosomal stalk of the 50S ribosomal subunit. Forms a multimeric L10(L12)X complex, where L10 forms an elongated spine to which 2 to 4 L12 dimers bind in a sequential fashion. Binds GTP-bound translation factors.

Forms part of the ribosomal stalk which helps the ribosome interact with GTP-bound translation factors. Is thus essential for accurate translation. The sequence is that of Large ribosomal subunit protein bL12 from Shewanella loihica (strain ATCC BAA-1088 / PV-4).